The primary structure comprises 630 residues: Polyphenol oxidase A, chloroplastic (630 aa).

Residues 1–25 form a disordered region; sequence MASLCSNSSSTSLKTPFTSSTTCLS. The transit peptide at 1–87 directs the protein to the chloroplast; that stretch reads MASLCSNSSS…ANAIPLAASA (87 aa). 2 disulfides stabilise this stretch: C98-C114 and C113-C181. Positions 180, 198, 207, 328, 332, and 370 each coordinate Cu cation. The 2'-(S-cysteinyl)-histidine (Cys-His) cross-link spans 184–198; it reads CNGGYSIDGKVLQVH.

Belongs to the tyrosinase family. It depends on Cu(2+) as a cofactor.

It localises to the plastid. It is found in the chloroplast thylakoid lumen. The catalysed reaction is 2 catechol + O2 = 2 1,2-benzoquinone + 2 H2O. Functionally, catalyzes the oxidation of mono- and o-diphenols to o-diquinones. The polypeptide is Polyphenol oxidase A, chloroplastic (Solanum lycopersicum (Tomato)).